The following is a 106-amino-acid chain: Movement protein TGB2 (106 aa).

The Cytoplasmic segment spans residues 1-8 (MPLTPPPD). The helical transmembrane segment at 9–29 (YTRVYTALAIGASIAFFTGLI) threads the bilayer. The Lumenal portion of the chain corresponds to 30–73 (TRNTLPSVGDLQHNLPHGGRYRDGTKSVEYCGPRKLNSVESGSR). A helical transmembrane segment spans residues 74–94 (WTFQPWLLVIVLVALIIALGR). Over 95–106 (QGHNCRACGRSH) the chain is Cytoplasmic.

The protein belongs to the Tymovirales TGBp2 protein family.

The protein resides in the host endoplasmic reticulum membrane. Plays a role in viral cell-to-cell propagation, by facilitating genome transport to neighboring plant cells through plasmosdesmata,. The polypeptide is Movement protein TGB2 (Lilium (LSV)).